Consider the following 505-residue polypeptide: L-arabinose isomerase (505 aa).

Glu308, Glu335, His352, and His453 together coordinate Mn(2+).

Belongs to the arabinose isomerase family. Mn(2+) serves as cofactor.

It carries out the reaction beta-L-arabinopyranose = L-ribulose. It participates in carbohydrate degradation; L-arabinose degradation via L-ribulose; D-xylulose 5-phosphate from L-arabinose (bacterial route): step 1/3. Functionally, catalyzes the conversion of L-arabinose to L-ribulose. The chain is L-arabinose isomerase from Bifidobacterium longum (strain DJO10A).